The primary structure comprises 68 residues: Medusin-AS (68 aa).

The signal sequence occupies residues 1 to 22 (MAFLKKSLFLVLFLGLVSLSVC). The propeptide occupies 23 to 49 (EEEKRESEEEKNEQEEDDRDERSEEKR). The interval 24–46 (EEKRESEEEKNEQEEDDRDERSE) is disordered. Acidic residues predominate over residues 31 to 41 (EEKNEQEEDDR). Leu67 carries the post-translational modification Leucine amide.

This sequence belongs to the frog skin active peptide (FSAP) family. Medusin subfamily. As to expression, expressed by the skin glands.

The protein localises to the secreted. Antimicrobial peptide active against Gram-positive bacteria and fungi but inactive against Gram-negative bacteria. Also inhibits growth of B.dendrobatidis zoospores at high concentrations. Shows anticancer activities. Shows hemolytic activity. This is Medusin-AS from Agalychnis spurrelli (Gliding leaf frog).